Reading from the N-terminus, the 102-residue chain is Large ribosomal subunit protein bL21 (102 aa).

This sequence belongs to the bacterial ribosomal protein bL21 family. As to quaternary structure, part of the 50S ribosomal subunit. Contacts protein L20.

Functionally, this protein binds to 23S rRNA in the presence of protein L20. The protein is Large ribosomal subunit protein bL21 of Nitratidesulfovibrio vulgaris (strain DSM 19637 / Miyazaki F) (Desulfovibrio vulgaris).